The sequence spans 258 residues: Probable N-acetylglucosaminyl-phosphatidylinositol de-N-acetylase (258 aa).

A disordered region spans residues 147 to 170 (KSSSTTTTSTTSSSSSSSSLSNRT). Low complexity predominate over residues 148-170 (SSSTTTTSTTSSSSSSSSLSNRT).

This sequence belongs to the PIGL family.

It is found in the endoplasmic reticulum membrane. It catalyses the reaction a 6-(N-acetyl-alpha-D-glucosaminyl)-1-(1,2-diacyl-sn-glycero-3-phospho)-1D-myo-inositol + H2O = a 6-(alpha-D-glucosaminyl)-1-(1,2-diacyl-sn-glycero-3-phospho)-1D-myo-inositol + acetate. It participates in glycolipid biosynthesis; glycosylphosphatidylinositol-anchor biosynthesis. Functionally, involved in the second step of GPI biosynthesis. De-N-acetylation of N-acetylglucosaminyl-phosphatidylinositol. The sequence is that of Probable N-acetylglucosaminyl-phosphatidylinositol de-N-acetylase (pigl) from Dictyostelium discoideum (Social amoeba).